We begin with the raw amino-acid sequence, 1331 residues long: ABC multidrug transporter MDR2 (1331 aa).

Composition is skewed to basic and acidic residues over residues 1–20 and 31–41; these read MVEVSEKPNTQDDGVSKQEN and SDKEKVAKKGN. The disordered stretch occupies residues 1–51; sequence MVEVSEKPNTQDDGVSKQENRNPASSSSSTSDKEKVAKKGNSDATKSSTPE. Helical transmembrane passes span 93–113, 147–167, 219–239, and 242–262; these read MIFLAIVSLASIAAGAALPLF, YFVYLGIAQFILLYVSTVGFI, KVGLTLTALSTFFSAFIIGYV, and WKLALICSSTIVAMILVMGGI. The 291-residue stretch at 97–387 folds into the ABC transmembrane type-1 1 domain; the sequence is AIVSLASIAA…VAPNTQAFAS (291 aa). The N-linked (GlcNAc...) asparagine glycan is linked to Asn293. Transmembrane regions (helical) follow at residues 325-345 and 358-378; these read LGIMFGSMMAIMYSNYGLGFW and LSAIVNILLAIVIGSFSIGNV. Positions 422–667 constitute an ABC transporter 1 domain; it reads IEFRGIKHIY…KGTYLQLVEA (246 aa). 457 to 464 contributes to the ATP binding site; it reads GPSGSGKS. A glycan (N-linked (GlcNAc...) asparagine) is linked at Asn529. Transmembrane regions (helical) follow at residues 762–782 and 810–830; these read LCGFFFAVLSGAGQPVQSVFF and FLMLGLVQLVTQSAQGVIFAI. An ABC transmembrane type-1 2 domain is found at 764–1051; that stretch reads GFFFAVLSGA…VFSFSPDMGK (288 aa). An N-linked (GlcNAc...) asparagine glycan is attached at Asn860. A run of 4 helical transmembrane segments spans residues 884–904, 910–930, 995–1015, and 1025–1045; these read LGTILMVSTTLIVALTVALAF, LVCISTVPVLLLCGFYRFWIL, ASQSFSFFCLALGFWYGGGLL, and FFLCISCVIFGSQSAGIVFSF. One can recognise an ABC transporter 2 domain in the interval 1086 to 1324; sequence IEFRDVHFRY…KGRYYELVHM (239 aa). Asn1108 carries N-linked (GlcNAc...) asparagine glycosylation. 1121 to 1128 serves as a coordination point for ATP; sequence GPSGCGKS.

Belongs to the ABC transporter superfamily. ABCB family. Multidrug resistance exporter (TC 3.A.1.201) subfamily.

The protein resides in the cell membrane. It carries out the reaction itraconazole(in) + ATP + H2O = itraconazole(out) + ADP + phosphate + H(+). In terms of biological role, pleiotropic ABC efflux transporter that may be involved in the modulation susceptibility to a wide range of unrelated cytotoxic compounds, including terbinafine, 4-nitroquinoline N-oxide, and ethidium bromide. May play a role in pathogenicity. This Trichophyton interdigitale (strain MR816) protein is ABC multidrug transporter MDR2.